The following is an 88-amino-acid chain: UPF0335 protein Mnod_5968 (88 aa).

Belongs to the UPF0335 family.

The chain is UPF0335 protein Mnod_5968 from Methylobacterium nodulans (strain LMG 21967 / CNCM I-2342 / ORS 2060).